Consider the following 440-residue polypeptide: tRNA-2-methylthio-N(6)-dimethylallyladenosine synthase (440 aa).

The MTTase N-terminal domain maps to 2-118 (PKYYIITYGC…LPKILESLDG (117 aa)). C11, C47, C81, C155, C159, and C162 together coordinate [4Fe-4S] cluster. In terms of domain architecture, Radical SAM core spans 141 to 370 (RENKFQAWIP…ENLQRKIIYE (230 aa)). Residues 373-436 (LSRVGKEEIV…LWSLKGEVIR (64 aa)) enclose the TRAM domain.

The protein belongs to the methylthiotransferase family. MiaB subfamily. As to quaternary structure, monomer. [4Fe-4S] cluster serves as cofactor.

The protein localises to the cytoplasm. The enzyme catalyses N(6)-dimethylallyladenosine(37) in tRNA + (sulfur carrier)-SH + AH2 + 2 S-adenosyl-L-methionine = 2-methylsulfanyl-N(6)-dimethylallyladenosine(37) in tRNA + (sulfur carrier)-H + 5'-deoxyadenosine + L-methionine + A + S-adenosyl-L-homocysteine + 2 H(+). Functionally, catalyzes the methylthiolation of N6-(dimethylallyl)adenosine (i(6)A), leading to the formation of 2-methylthio-N6-(dimethylallyl)adenosine (ms(2)i(6)A) at position 37 in tRNAs that read codons beginning with uridine. The chain is tRNA-2-methylthio-N(6)-dimethylallyladenosine synthase from Dictyoglomus thermophilum (strain ATCC 35947 / DSM 3960 / H-6-12).